The sequence spans 150 residues: Ribonuclease K6 (150 aa).

The N-terminal stretch at 1-23 (MVLCFPLLLLLLVLWGPVCLLHA) is a signal peptide. Residue His-38 is the Proton acceptor of the active site. 4 disulfides stabilise this stretch: Cys-46/Cys-104, Cys-60/Cys-114, Cys-78/Cys-129, and Cys-85/Cys-92. Residue Asn-55 is glycosylated (N-linked (GlcNAc...) asparagine). Residues 61–65 (KHQNT) and Lys-86 each bind substrate. Residue Asn-100 is glycosylated (N-linked (GlcNAc...) asparagine). Arg-105 serves as a coordination point for substrate. The active-site Proton donor is the His-145.

Belongs to the pancreatic ribonuclease family. As to quaternary structure, interacts (via N-terminus) with bacterial lipopolysaccharide (LPS).

It localises to the secreted. The protein localises to the lysosome. The protein resides in the cytoplasmic granule. Ribonuclease which shows a preference for the pyrimidines uridine and cytosine. Has potent antibacterial activity against a range of Gram-positive and Gram-negative bacteria, including P.aeruginosa, A.baumanii, M.luteus, S.aureus, E.faecalis, E.faecium, S.saprophyticus and E.coli. Causes loss of bacterial membrane integrity, and also promotes agglutination of Gram-negative bacteria. Probably contributes to urinary tract sterility. Bactericidal activity is independent of RNase activity. This is Ribonuclease K6 (RNASE6) from Macaca mulatta (Rhesus macaque).